A 231-amino-acid chain; its full sequence is Quercetin 2,3-dioxygenase (231 aa).

Residues His-57, His-59, His-101, and Glu-103 each contribute to the a divalent metal cation site.

It belongs to the pirin family. It depends on Zn(2+) as a cofactor. Co(2+) serves as cofactor. Requires Fe(2+) as cofactor.

The catalysed reaction is quercetin + O2 = 2-(3,4-dihydroxybenzoyloxy)-4,6-dihydroxybenzoate + CO. Its pathway is flavonoid metabolism; quercetin degradation. Has quercetin 2,3-dioxygenase activity in vitro. Its physiological role is unknown; however, may provide a mechanism that would avoid inhibition of key cellular proteins, such as DNA gyrase, by quercetin. The chain is Quercetin 2,3-dioxygenase (yhhW) from Escherichia coli O157:H7.